Reading from the N-terminus, the 372-residue chain is 4-hydroxy-3-methylbut-2-en-1-yl diphosphate synthase (flavodoxin) (372 aa).

Cys-270, Cys-273, Cys-305, and Glu-312 together coordinate [4Fe-4S] cluster.

Belongs to the IspG family. It depends on [4Fe-4S] cluster as a cofactor.

It catalyses the reaction (2E)-4-hydroxy-3-methylbut-2-enyl diphosphate + oxidized [flavodoxin] + H2O + 2 H(+) = 2-C-methyl-D-erythritol 2,4-cyclic diphosphate + reduced [flavodoxin]. It participates in isoprenoid biosynthesis; isopentenyl diphosphate biosynthesis via DXP pathway; isopentenyl diphosphate from 1-deoxy-D-xylulose 5-phosphate: step 5/6. Converts 2C-methyl-D-erythritol 2,4-cyclodiphosphate (ME-2,4cPP) into 1-hydroxy-2-methyl-2-(E)-butenyl 4-diphosphate. This chain is 4-hydroxy-3-methylbut-2-en-1-yl diphosphate synthase (flavodoxin), found in Alteromonas mediterranea (strain DSM 17117 / CIP 110805 / LMG 28347 / Deep ecotype).